The chain runs to 81 residues: Sulfur carrier protein TusA (81 aa).

Cys-19 serves as the catalytic Cysteine persulfide intermediate.

The protein belongs to the sulfur carrier protein TusA family. As to quaternary structure, interacts with IscS.

It is found in the cytoplasm. Its pathway is tRNA modification. Sulfur carrier protein involved in sulfur trafficking in the cell. Part of a sulfur-relay system required for 2-thiolation during synthesis of 2-thiouridine of the modified wobble base 5-methylaminomethyl-2-thiouridine (mnm(5)s(2)U) in tRNA. Interacts with IscS and stimulates its cysteine desulfurase activity. Accepts an activated sulfur from IscS, which is then transferred to TusD, and thus determines the direction of sulfur flow from IscS to 2-thiouridine formation. Also appears to be involved in sulfur transfer for the biosynthesis of molybdopterin. The chain is Sulfur carrier protein TusA from Shigella boydii serotype 18 (strain CDC 3083-94 / BS512).